A 289-amino-acid chain; its full sequence is Probable porphobilinogen deaminase (289 aa).

Cysteine 234 carries the post-translational modification S-(dipyrrolylmethanemethyl)cysteine.

Belongs to the HMBS family. The cofactor is dipyrromethane.

It catalyses the reaction 4 porphobilinogen + H2O = hydroxymethylbilane + 4 NH4(+). Its pathway is porphyrin-containing compound metabolism; protoporphyrin-IX biosynthesis; coproporphyrinogen-III from 5-aminolevulinate: step 2/4. Functionally, tetrapolymerization of the monopyrrole PBG into the hydroxymethylbilane pre-uroporphyrinogen in several discrete steps. The chain is Probable porphobilinogen deaminase (hemC) from Archaeoglobus fulgidus (strain ATCC 49558 / DSM 4304 / JCM 9628 / NBRC 100126 / VC-16).